A 539-amino-acid polypeptide reads, in one-letter code: Sorting nexin-27 (539 aa).

The interval 1–40 (MADEDGEGIHPSTPHRNGGGGGGSGLHCAGNGGGGGGGPR) is disordered. The segment covering 17-39 (NGGGGGGSGLHCAGNGGGGGGGP) has biased composition (gly residues). In terms of domain architecture, PDZ spans 41 to 134 (VVRIVKSESG…ELILTVLSVP (94 aa)). Phosphoserine occurs at positions 49 and 60. Residues 159–267 (QAVPISVPTY…EFLSESDENY (109 aa)) form the PX domain. A Ras-associating domain is found at 271-360 (SDVELRVALP…TCLTIRKWLF (90 aa)). The tract at residues 271–360 (SDVELRVALP…TCLTIRKWLF (90 aa)) is FERM-like region F1. The segment at 371–419 (NDLAVTYFFHQAVDDVKKGYIKAEEKSYQLQKLYEQRKMVMYLNMLRTC) is FERM-like region F2. The tract at residues 423–523 (NEIIFPHCAC…RVFCELKWRK (101 aa)) is FERM-like region F3.

Core component of the SNX27-retromer, a multiprotein complex composed of SNX27, the WASH complex and the retromer complex. Interacts (via PDZ domain) with a number of target transmembrane proteins (via PDZ-binding motif): ABCC4, ADRB2, ARHGEF7, GRIA1, GRIA2, GRIN1, GRIN2A GRIN2C, KCNJ6, KCNJ9 and SLC2A1/GLUT1. Interacts (via the FERM-like regions) with the WASH complex. Interacts with SNX1. Interacts with CYTIP. Interacts with DGKZ. Interacts with MCC. Interacts (via PDZ domains) with SLC9A3; directs SLC9A3 membrane insertion from early endosomes to the plasma membrane. In terms of tissue distribution, isoform 1 is predominantly expressed in the testis, whereas isoform 2 is predominant in various brain regions, including, neocortex, paleocortex, striatum, hippocampus, cerebellum and brain stem. Expressed in cells of hematopoietic origin.

The protein resides in the early endosome membrane. It is found in the cytoplasm. It localises to the cytosol. Its function is as follows. Involved in the retrograde transport from endosome to plasma membrane, a trafficking pathway that promotes the recycling of internalized transmembrane proteins. Following internalization, endocytosed transmembrane proteins are delivered to early endosomes and recycled to the plasma membrane instead of being degraded in lysosomes. SNX27 specifically binds and directs sorting of a subset of transmembrane proteins containing a PDZ-binding motif at the C-terminus: following interaction with target transmembrane proteins, associates with the retromer complex, preventing entry into the lysosomal pathway, and promotes retromer-tubule based plasma membrane recycling. SNX27 also binds with the WASH complex. Interacts with membranes containing phosphatidylinositol-3-phosphate (PtdIns(3P)). May participate in establishment of natural killer cell polarity. Recruits CYTIP to early endosomes. The chain is Sorting nexin-27 (Snx27) from Rattus norvegicus (Rat).